We begin with the raw amino-acid sequence, 635 residues long: Chaperone protein HtpG (635 aa).

Residues 1–346 (MSQTTTTSAS…SADLPLNVSR (346 aa)) are a; substrate-binding. A b region spans residues 347–563 (EILQESRDVR…QNELSPHLLR (217 aa)). The tract at residues 564 to 635 (MLKAAGQEAP…KRLNGLLLKA (72 aa)) is c.

This sequence belongs to the heat shock protein 90 family. Homodimer.

The protein resides in the cytoplasm. Its function is as follows. Molecular chaperone. Has ATPase activity. This chain is Chaperone protein HtpG, found in Bordetella pertussis (strain Tohama I / ATCC BAA-589 / NCTC 13251).